Consider the following 971-residue polypeptide: Mating-type switching protein swi1 (971 aa).

Phosphoserine occurs at positions 528, 536, and 970.

Fork protection complex (FPC) consisting of swi1 and swi3 interacts with mat1 cis-acting sequences and mat1-proximal polar-terminator of replication (RTS1).

It is found in the nucleus. Its function is as follows. Forms a fork protection complex (FPC) with swi3. FPC coordinates leading and lagging strand synthesis and moves with the replication fork. It is required for programmed fork-pausing which is necessary for mating-type switching. FPC stabilizes replication forks in a configuration that is recognized by replication checkpoint sensors. It is involved in termination at the mat1-proximal polar-terminator of replication (RTS1) and also required for activation of the Rad53-like checkpoint kinase cds1. The protein is Mating-type switching protein swi1 (swi1) of Schizosaccharomyces pombe (strain 972 / ATCC 24843) (Fission yeast).